The sequence spans 151 residues: UPF0756 membrane protein Aflv_0503 (151 aa).

4 consecutive transmembrane segments (helical) span residues 4–24 (FIFL…SLII), 52–72 (LGVT…KIGF), 85–105 (WIAM…VALL), and 115–135 (LVLG…GPLI).

The protein belongs to the UPF0756 family.

Its subcellular location is the cell membrane. The chain is UPF0756 membrane protein Aflv_0503 from Anoxybacillus flavithermus (strain DSM 21510 / WK1).